The primary structure comprises 181 residues: Bifunctional protein PyrR (181 aa).

A PRPP-binding motif is present at residues 101–113 (VIVVDDVLYTGRT).

Belongs to the purine/pyrimidine phosphoribosyltransferase family. PyrR subfamily. Homodimer and homohexamer; in equilibrium.

The catalysed reaction is UMP + diphosphate = 5-phospho-alpha-D-ribose 1-diphosphate + uracil. In terms of biological role, regulates transcriptional attenuation of the pyrimidine nucleotide (pyr) operon by binding in a uridine-dependent manner to specific sites on pyr mRNA. This disrupts an antiterminator hairpin in the RNA and favors formation of a downstream transcription terminator, leading to a reduced expression of downstream genes. Also displays a weak uracil phosphoribosyltransferase activity which is not physiologically significant. This chain is Bifunctional protein PyrR, found in Bacillus velezensis (strain DSM 23117 / BGSC 10A6 / LMG 26770 / FZB42) (Bacillus amyloliquefaciens subsp. plantarum).